Here is a 354-residue protein sequence, read N- to C-terminus: Uroporphyrinogen decarboxylase (354 aa).

Residues 27–31 (RQAGR), Asp-77, Tyr-154, Ser-209, and His-327 contribute to the substrate site.

The protein belongs to the uroporphyrinogen decarboxylase family. As to quaternary structure, homodimer.

It localises to the cytoplasm. It catalyses the reaction uroporphyrinogen III + 4 H(+) = coproporphyrinogen III + 4 CO2. It participates in porphyrin-containing compound metabolism; protoporphyrin-IX biosynthesis; coproporphyrinogen-III from 5-aminolevulinate: step 4/4. Catalyzes the decarboxylation of four acetate groups of uroporphyrinogen-III to yield coproporphyrinogen-III. This chain is Uroporphyrinogen decarboxylase, found in Shewanella denitrificans (strain OS217 / ATCC BAA-1090 / DSM 15013).